Consider the following 78-residue polypeptide: Ubiquinol-cytochrome-c reductase complex assembly factor 3 (78 aa).

Topologically, residues methionine 1 to arginine 5 are mitochondrial matrix. The helical transmembrane segment at isoleucine 6–proline 26 threads the bilayer. Topologically, residues glycine 27–lysine 78 are mitochondrial intermembrane.

It belongs to the UQCC3 family. In terms of assembly, associates with the ubiquinol-cytochrome c reductase complex (mitochondrial respiratory chain complex III or cytochrome b-c1 complex).

It is found in the mitochondrion inner membrane. Required for the assembly of the ubiquinol-cytochrome c reductase complex (mitochondrial respiratory chain complex III or cytochrome b-c1 complex), mediating cytochrome b recruitment and probably stabilization within the complex. Thereby, plays an important role in ATP production by mitochondria. Cardiolipin-binding protein, it may also control the cardiolipin composition of mitochondria membranes and their morphology. The sequence is that of Ubiquinol-cytochrome-c reductase complex assembly factor 3 from Danio rerio (Zebrafish).